The following is a 503-amino-acid chain: L-amino-acid oxidase (503 aa).

A signal peptide spans 1–18; that stretch reads MNVFFMFSLLFLAALGSC. A disulfide bridge connects residues Cys28 and Cys191. Residues 61 to 62, 81 to 82, Arg89, and 105 to 108 each bind FAD; these read MS, EA, and GPMR. Arg108 is a substrate binding site. Asn190 carries N-linked (GlcNAc...) asparagine glycosylation. His241 lines the substrate pocket. Val279 lines the FAD pocket. A disulfide bridge links Cys349 with Cys430. Tyr390 is a binding site for substrate. FAD is bound by residues Glu475 and 482 to 487; that span reads GWIDST. Substrate is bound at residue 482–483; the sequence is GW.

Belongs to the flavin monoamine oxidase family. FIG1 subfamily. As to quaternary structure, homodimer; non-covalently linked. FAD is required as a cofactor. N-glycosylated. The enzymatic activity is not affected by deglycosylation. In terms of tissue distribution, expressed by the venom gland.

It localises to the secreted. It carries out the reaction an L-alpha-amino acid + O2 + H2O = a 2-oxocarboxylate + H2O2 + NH4(+). The enzyme catalyses L-leucine + O2 + H2O = 4-methyl-2-oxopentanoate + H2O2 + NH4(+). The catalysed reaction is L-phenylalanine + O2 + H2O = 3-phenylpyruvate + H2O2 + NH4(+). It catalyses the reaction L-methionine + O2 + H2O = 4-methylsulfanyl-2-oxobutanoate + H2O2 + NH4(+). It carries out the reaction L-isoleucine + O2 + H2O = (S)-3-methyl-2-oxopentanoate + H2O2 + NH4(+). Functionally, catalyzes an oxidative deamination of predominantly hydrophobic and aromatic L-amino acids, thus producing hydrogen peroxide that may contribute to the diverse toxic effects of this enzyme. Is highly active on L-Met, L-Leu, L-Phe and L-Ile. Exhibits diverse biological activities, such as antibacterial on both Gram-positive and Gram-negative bacteria and antiparasitic activities, as well as induction of platelet aggregation. Effects of snake L-amino oxidases on platelets are controversial, since they either induce aggregation or inhibit agonist-induced aggregation. These different effects are probably due to different experimental conditions. This protein may also have activities in hemorrhage, hemolysis, edema, and apoptosis. This chain is L-amino-acid oxidase, found in Bothrops pauloensis (Neuwied's lancehead).